A 168-amino-acid polypeptide reads, in one-letter code: G/U mismatch-specific DNA glycosylase (168 aa).

Belongs to the uracil-DNA glycosylase (UDG) superfamily. TDG/mug family. In terms of assembly, binds DNA as a monomer.

It is found in the cytoplasm. The enzyme catalyses Specifically hydrolyzes mismatched double-stranded DNA and polynucleotides, releasing free uracil.. Its function is as follows. Excises ethenocytosine and uracil, which can arise by alkylation or deamination of cytosine, respectively, from the corresponding mispairs with guanine in ds-DNA. It is capable of hydrolyzing the carbon-nitrogen bond between the sugar-phosphate backbone of the DNA and the mispaired base. The complementary strand guanine functions in substrate recognition. Required for DNA damage lesion repair in stationary-phase cells. This chain is G/U mismatch-specific DNA glycosylase, found in Escherichia coli (strain SMS-3-5 / SECEC).